Consider the following 63-residue polypeptide: Large ribosomal subunit protein bL28 (63 aa).

This sequence belongs to the bacterial ribosomal protein bL28 family.

The protein is Large ribosomal subunit protein bL28 of Hydrogenobaculum sp. (strain Y04AAS1).